We begin with the raw amino-acid sequence, 323 residues long: Cyclin-H (323 aa).

Residue Ser5 is modified to Phosphoserine; by CDK8. Ser132 is modified (phosphoserine). The tract at residues 295–323 is disordered; sequence KGYEDDDYVSKKPKQEEEEWTDDDLVDSL. Ser304 carries the post-translational modification Phosphoserine; by CDK8. The span at 310–323 shows a compositional bias: acidic residues; sequence EEEEWTDDDLVDSL. Thr315 carries the post-translational modification Phosphothreonine. Ser322 carries the phosphoserine modification.

The protein belongs to the cyclin family. Cyclin C subfamily. As to quaternary structure, associates primarily with CDK7 and MAT1 to form the CAK complex. CAK can further associate with the core-TFIIH to form the TFIIH basal transcription factor. As to expression, expressed in both the germinal and somatic cells of the testis.

The protein localises to the nucleus. Regulates CDK7, the catalytic subunit of the CDK-activating kinase (CAK) enzymatic complex. CAK activates the cyclin-associated kinases CDK1, CDK2, CDK4 and CDK6 by threonine phosphorylation. CAK complexed to the core-TFIIH basal transcription factor activates RNA polymerase II by serine phosphorylation of the repetitive C-terminal domain (CTD) of its large subunit (POLR2A), allowing its escape from the promoter and elongation of the transcripts. Involved in cell cycle control and in RNA transcription by RNA polymerase II. Its expression and activity are constant throughout the cell cycle. This Mus musculus (Mouse) protein is Cyclin-H (Ccnh).